A 380-amino-acid polypeptide reads, in one-letter code: Cytochrome b (380 aa).

The next 4 helical transmembrane spans lie at 33-53 (FGSL…FLAM), 77-98 (WLIR…YLHV), 113-133 (WNIG…GYVL), and 178-198 (FFAF…IHLL). Positions 83 and 97 each coordinate heme b. Positions 182 and 196 each coordinate heme b. Histidine 201 lines the a ubiquinone pocket. Helical transmembrane passes span 226 to 246 (YKDL…ALFS), 288 to 308 (LGGV…PMLH), 320 to 340 (LSQI…WIGG), and 347 to 367 (FVLI…IALP).

It belongs to the cytochrome b family. The cytochrome bc1 complex contains 3 respiratory subunits (MT-CYB, CYC1 and UQCRFS1), 2 core proteins (UQCRC1 and UQCRC2) and probably 6 low-molecular weight proteins. Heme b is required as a cofactor.

Its subcellular location is the mitochondrion inner membrane. Functionally, component of the ubiquinol-cytochrome c reductase complex (complex III or cytochrome b-c1 complex) that is part of the mitochondrial respiratory chain. The b-c1 complex mediates electron transfer from ubiquinol to cytochrome c. Contributes to the generation of a proton gradient across the mitochondrial membrane that is then used for ATP synthesis. This is Cytochrome b (mt-cyb) from Acipenser persicus (Persian sturgeon).